The chain runs to 415 residues: WD repeat-containing protein JIP5 (415 aa).

WD repeat units follow at residues 5–44 (DVGSQIFDVVFHPTFATVYTGLLNGHVKAFAYNEQGKEQA), 104–142 (AHDSTINRVKYLMPWLISTGDDDGVIKLWDPRQQECVRE), 145–184 (QHFDYITDFLWLDDKKQLVATSGDGTLSVMDVRSKKPEPF), 189–228 (DQDDELLSIVAIKGHSKIVVGTQLGILSIFNRSKGWGDCV), and 233–282 (GHPL…VVAD). The segment at 328 to 415 (GALGVTNENE…DVENAFFDEL (88 aa)) is disordered. Positions 337–346 (EQSDEDEEMD) are enriched in acidic residues. A compositionally biased stretch (low complexity) spans 358-367 (DGSGSSSSGE). Residues 390 to 405 (EQKPLDVDKPKGRNEI) show a composition bias toward basic and acidic residues.

Belongs to the WD repeat WDR55 family.

It is found in the nucleus. The protein resides in the nucleolus. The protein is WD repeat-containing protein JIP5 (JIP5) of Laccaria bicolor (strain S238N-H82 / ATCC MYA-4686) (Bicoloured deceiver).